Reading from the N-terminus, the 579-residue chain is PCNA-interacting partner (579 aa).

The segment at 480–543 is disordered; that stretch reads TSFGNVHLDR…AKIPKKSNDS (64 aa). Basic and acidic residues predominate over residues 486 to 496; that stretch reads HLDRSKNEKVS.

The protein belongs to the PARI family. Interacts with RAD51 and PCNA. Interacts with PARP1. Interacts with TASOR. Restricted to testis. Overexpressed in multiple cancer cells.

It is found in the cytoplasm. It localises to the nucleus. Functionally, required to suppress inappropriate homologous recombination, thereby playing a central role DNA repair and in the maintenance of genomic stability. Antagonizes homologous recombination by interfering with the formation of the RAD51-DNA homologous recombination structure. Binds single-strand DNA and poly(A) homopolymers. Positively regulate the poly(ADP-ribosyl)ation activity of PARP1; however such function may be indirect. The sequence is that of PCNA-interacting partner (PARPBP) from Homo sapiens (Human).